A 500-amino-acid chain; its full sequence is Cytochrome P450 monooxygenase hepD (500 aa).

A helical membrane pass occupies residues 15–35 (WILLSLSLAFIVVYSLFYLAV). Asn-99, Asn-185, Asn-373, and Asn-409 each carry an N-linked (GlcNAc...) asparagine glycan. Cys-445 is a heme binding site. Asn-482 carries an N-linked (GlcNAc...) asparagine glycan.

The protein belongs to the cytochrome P450 family. Requires heme as cofactor.

The protein resides in the membrane. Its pathway is secondary metabolite biosynthesis. Cytochrome P450 monooxygenase; part of the gene cluster that mediates the biosynthesis of heptelidic acid (HA), a sesquiterpene lactone that acts as an inhibitor of glyceraldehyde-3-phosphatedehydrogenase (GAPDH) and a growth inhibitor of the salt-tolerant lactic acid bacteria in soy sauce brewing. This is Cytochrome P450 monooxygenase hepD from Aspergillus oryzae (strain ATCC 42149 / RIB 40) (Yellow koji mold).